A 360-amino-acid polypeptide reads, in one-letter code: MKKFAGLITASFVAATLTACNDKDAKQETAKATAAANDTVYLYTWTEYVPDGLLDEFTKETGIKVIVSSLESNETMYAKLKTQGESGGYDVIAPSNYFVSKMAREGMLKELDHSKLPVLKELDPDWLNKPYDKGNKYSLPQLLGAPGIAFNTNTYKGEQFTSWADLWKPEFANKVQLLDDAREVFNIALLKIGQDPNTQDPAIIKQAYEELLKLRPNVLSFNSDNPANSFISGEVEVGQLWNGSVRIAKKEKAPLNMVFPKEGPVLWVDTLAIPATAKNSEGAHKLINYMLGKKTAEKLTLAIGYPTSNIEAKKALPKEITEDPAIYPSADILKNSHWQDDVGDAIQFYEQYYQELKAAK.

An N-terminal signal peptide occupies residues 1 to 16; it reads MKKFAGLITASFVAAT.

The protein belongs to the bacterial solute-binding protein PotD/PotF family.

The protein resides in the periplasm. Required for the activity of the bacterial periplasmic transport system of putrescine and spermidine. Polyamine binding protein. The sequence is that of Spermidine/putrescine-binding periplasmic protein 1 (potD-B) from Haemophilus influenzae (strain ATCC 51907 / DSM 11121 / KW20 / Rd).